A 577-amino-acid polypeptide reads, in one-letter code: MASQTSAPAEPAPMPSPEAKTTEGASSYDQADMETKHAGSPCPPKQKSWLARHFSLLLRRDRQAQKAGQLFSGLLALNVVFLGGAFICSMIFNKVSVTLGDVWILLAALKVLSLLWLLYYTVGTTRKPHAVLYRDPHAGPIWVRGSLVLFGSCTVCLNIFRMGYDVSHIHCKSEVELIFPAIEIVFMIIQTWVLWRHCKDCVQVQTNFTRCGLMLTLATNLLMWVLAVTNDSMHREIEAELDALMEKFSGNGTNTCMCLNTTVCEVFRKGYLMLYPFSTEYCLICCAVLFVMWKNVSRSLAAHTGAHPNRSPFRLHGTIFGPLLGLLALVAGVCVFVLFQIEASGPDIARQYFTLYYAFYVAVLPTMSLACLAGTAIHGLEERELDTLKNPTRSLDVVLLMGAALGQMGIAYFSIVAIVATQPHELLNQLILAYSLLLILQHITQNLFIIEGLHRRPLWEPAVSGVMEKQDVELPRRGSLRELGQDLRRASRAYIHSFSHLNWKRRMLKEISLFLILCNITLWMMPAFGIHPEFENGLEKDFYGYRTWFTIVNFGLPLGVFYRMHSVGGLVEVYLGA.

Residues Met1 to Gln46 are disordered. The Cytoplasmic segment spans residues Met1–Gln69. A helical transmembrane segment spans residues Leu70–Met90. At Ile91–Gly100 the chain is on the extracellular side. The chain crosses the membrane as a helical span at residues Asp101–Thr124. The Cytoplasmic segment spans residues Thr125 to Pro140. The chain crosses the membrane as a helical span at residues Ile141–Met162. Residues Gly163–Glu174 lie on the Extracellular side of the membrane. The chain crosses the membrane as a helical span at residues Val175–Cys198. The Cytoplasmic segment spans residues Lys199 to Thr206. Residues Asn207 to Thr229 form a helical membrane-spanning segment. Residues Asn230 to Pro276 are Extracellular-facing. Residues Phe277–Trp293 form a helical membrane-spanning segment. The Cytoplasmic segment spans residues Lys294–Ile319. A helical transmembrane segment spans residues Phe320–Phe339. Topologically, residues Gln340 to Phe353 are extracellular. The chain crosses the membrane as a helical span at residues Thr354–Ala376. Over Ile377–Ser394 the chain is Cytoplasmic. The helical transmembrane segment at Leu395–Val416 threads the bilayer. At Ala417–Leu427 the chain is on the extracellular side. Residues Asn428–Ile450 traverse the membrane as a helical segment. Residues Glu451–Glu510 lie on the Cytoplasmic side of the membrane. Residues Ile511–Phe528 traverse the membrane as a helical segment. Over Gly529–Thr547 the chain is Extracellular. The helical transmembrane segment at Trp548–Leu570 threads the bilayer. The Cytoplasmic segment spans residues Val571–Ala577.

This sequence belongs to the otopetrin family. In terms of assembly, homodimer. In terms of tissue distribution, expressed in epidermis, small intestine, stomach and retina.

It is found in the cell membrane. The catalysed reaction is H(+)(in) = H(+)(out). Activated by extracellular acidification. Activated by Zn(2+) under non-acidic conditions. Proton-selective channel gated by extracellular protons. The polypeptide is Proton channel OTOP3 (Mus musculus (Mouse)).